Here is a 281-residue protein sequence, read N- to C-terminus: Shikimate dehydrogenase (NADP(+)) (281 aa).

Residues 14–16 (SKS) and T61 contribute to the shikimate site. K65 serves as the catalytic Proton acceptor. Residues N86 and D105 each coordinate shikimate. Residues 130–134 (GAGGA), 154–159 (NRTAAK), and M221 contribute to the NADP(+) site. A shikimate-binding site is contributed by Y223. Residue G245 coordinates NADP(+).

Belongs to the shikimate dehydrogenase family. In terms of assembly, homodimer.

The enzyme catalyses shikimate + NADP(+) = 3-dehydroshikimate + NADPH + H(+). The protein operates within metabolic intermediate biosynthesis; chorismate biosynthesis; chorismate from D-erythrose 4-phosphate and phosphoenolpyruvate: step 4/7. Functionally, involved in the biosynthesis of the chorismate, which leads to the biosynthesis of aromatic amino acids. Catalyzes the reversible NADPH linked reduction of 3-dehydroshikimate (DHSA) to yield shikimate (SA). This Azoarcus sp. (strain BH72) protein is Shikimate dehydrogenase (NADP(+)).